The primary structure comprises 116 residues: Toxin ICK-10 (116 aa).

The first 19 residues, 1–19 (MMKLYSLVIIATLAAAAFA), serve as a signal peptide directing secretion. 4 disulfides stabilise this stretch: Cys-56/Cys-71, Cys-64/Cys-77, Cys-68/Cys-113, and Cys-70/Cys-84.

The protein belongs to the neurotoxin 25 family. ICK-8 subfamily. As to expression, expressed by the venom gland.

The protein localises to the secreted. Ion channel inhibitor. The sequence is that of Toxin ICK-10 from Trittame loki (Brush-footed trapdoor spider).